Reading from the N-terminus, the 385-residue chain is Glucans biosynthesis protein C (385 aa).

Helical transmembrane passes span 17–37 (AWLM…SHTW), 60–80 (MQVF…RYPL), 91–111 (VGIP…IMLQ), 137–157 (ISHL…VWIF), 173–193 (KFSM…YAVI), 212–232 (FIVM…LAFI), 239–259 (LFTT…VAYL), 274–294 (TESV…FSFG), 311–331 (ASLF…AYIT), and 338–358 (WLGF…LYEI).

It belongs to the acyltransferase 3 family. OpgC subfamily.

Its subcellular location is the cell membrane. The protein operates within glycan metabolism; osmoregulated periplasmic glucan (OPG) biosynthesis. In terms of biological role, necessary for the succinyl substitution of periplasmic glucans. Could catalyze the transfer of succinyl residues from the cytoplasmic side of the membrane to the nascent glucan backbones on the periplasmic side of the membrane. This Escherichia coli (strain K12 / MC4100 / BW2952) protein is Glucans biosynthesis protein C.